The chain runs to 141 residues: Hemoglobin subunit alpha (141 aa).

The Globin domain maps to 1-141 (VLSPADKTNV…VSTVLTSKYR (141 aa)). Phosphoserine is present on serine 3. Lysine 7 is subject to N6-succinyllysine. A Phosphothreonine modification is found at threonine 8. Lysine 11 is modified (N6-succinyllysine). The residue at position 16 (lysine 16) is an N6-acetyllysine; alternate. Lysine 16 carries the post-translational modification N6-succinyllysine; alternate. Tyrosine 24 is modified (phosphotyrosine). At serine 35 the chain carries Phosphoserine. At lysine 40 the chain carries N6-succinyllysine. Serine 49 bears the Phosphoserine mark. Position 58 (histidine 58) interacts with O2. Histidine 87 is a heme b binding site. Serine 102 is subject to Phosphoserine. At threonine 108 the chain carries Phosphothreonine. A Phosphoserine modification is found at serine 124. Residues threonine 134 and threonine 137 each carry the phosphothreonine modification. Serine 138 carries the post-translational modification Phosphoserine.

Belongs to the globin family. As to quaternary structure, heterotetramer of two alpha chains and two beta chains. As to expression, red blood cells.

Involved in oxygen transport from the lung to the various peripheral tissues. Its function is as follows. Hemopressin acts as an antagonist peptide of the cannabinoid receptor CNR1. Hemopressin-binding efficiently blocks cannabinoid receptor CNR1 and subsequent signaling. This Odobenus rosmarus divergens (Pacific walrus) protein is Hemoglobin subunit alpha (HBA).